The following is a 399-amino-acid chain: uncharacterized protein (399 aa).

WD repeat units lie at residues 59–99 (EHKD…QICQ), 102–141 (GHKDSIVAIDWSFDGTYIATGGMDSQVRLWKSSTGFEFIT), 144–185 (ETVD…QVMY), 187–227 (HTAP…PECR), 241–280 (ETAAGWTSFDCNAEGNVLFLGGSSGKVKVVNINSSHILAS), 283–322 (AQTESVEAIALCTALPICACASVDGTVALYDSASLKFRKS), 324–363 (PHEQAVIDCKFLPNTPYLLTACADCVIRKWDVRSGQLLGE), and 366–399 (GHQEPILCMAITPDGKRVVTGSDDTELLVFDCEH).

Its subcellular location is the cytoplasm. The protein localises to the nucleus. This is an uncharacterized protein from Schizosaccharomyces pombe (strain 972 / ATCC 24843) (Fission yeast).